The chain runs to 81 residues: Short neurotoxin 1 (81 aa).

Positions 1–21 (MKTLLLTLVVVTIVCLDLGYT) are cleaved as a signal peptide. 4 disulfides stabilise this stretch: Cys24–Cys43, Cys38–Cys60, Cys62–Cys73, and Cys74–Cys79.

The protein belongs to the three-finger toxin family. Short-chain subfamily. Type I alpha-neurotoxin sub-subfamily. As to expression, expressed by the venom gland.

The protein resides in the secreted. Its function is as follows. Binds to muscle nicotinic acetylcholine receptor (nAChR) and inhibit acetylcholine from binding to the receptor, thereby impairing neuromuscular transmission. The protein is Short neurotoxin 1 of Hoplocephalus stephensii (Stephens's banded snake).